The primary structure comprises 186 residues: Peptidyl-tRNA hydrolase (186 aa).

TRNA is bound at residue Tyr-16. His-21 acts as the Proton acceptor in catalysis. Tyr-66, Asn-68, and Asn-114 together coordinate tRNA.

Belongs to the PTH family. As to quaternary structure, monomer.

It localises to the cytoplasm. It carries out the reaction an N-acyl-L-alpha-aminoacyl-tRNA + H2O = an N-acyl-L-amino acid + a tRNA + H(+). In terms of biological role, hydrolyzes ribosome-free peptidyl-tRNAs (with 1 or more amino acids incorporated), which drop off the ribosome during protein synthesis, or as a result of ribosome stalling. Functionally, catalyzes the release of premature peptidyl moieties from peptidyl-tRNA molecules trapped in stalled 50S ribosomal subunits, and thus maintains levels of free tRNAs and 50S ribosomes. The protein is Peptidyl-tRNA hydrolase of Ureaplasma urealyticum serovar 10 (strain ATCC 33699 / Western).